The chain runs to 558 residues: Glucose-6-phosphate isomerase (558 aa).

The active-site Proton donor is glutamate 362. Catalysis depends on residues histidine 393 and lysine 523.

Belongs to the GPI family.

The protein localises to the cytoplasm. It carries out the reaction alpha-D-glucose 6-phosphate = beta-D-fructose 6-phosphate. Its pathway is carbohydrate degradation; glycolysis; D-glyceraldehyde 3-phosphate and glycerone phosphate from D-glucose: step 2/4. This chain is Glucose-6-phosphate isomerase (Pgi), found in Drosophila melanogaster (Fruit fly).